Consider the following 329-residue polypeptide: Ketol-acid reductoisomerase (NADP(+)) (329 aa).

One can recognise a KARI N-terminal Rossmann domain in the interval 2–182 (ARMYYEKDVD…GATRAGVLET (181 aa)). NADP(+)-binding positions include 25–28 (YGSQ), serine 51, serine 53, and 83–86 (DEKQ). Histidine 108 is an active-site residue. Glycine 134 contributes to the NADP(+) binding site. A KARI C-terminal knotted domain is found at 183-328 (TFKEETETDL…RNLRSMMSFL (146 aa)). Mg(2+) contacts are provided by aspartate 191, glutamate 195, glutamate 227, and glutamate 231. Serine 252 contributes to the substrate binding site.

It belongs to the ketol-acid reductoisomerase family. It depends on Mg(2+) as a cofactor.

It catalyses the reaction (2R)-2,3-dihydroxy-3-methylbutanoate + NADP(+) = (2S)-2-acetolactate + NADPH + H(+). The enzyme catalyses (2R,3R)-2,3-dihydroxy-3-methylpentanoate + NADP(+) = (S)-2-ethyl-2-hydroxy-3-oxobutanoate + NADPH + H(+). The protein operates within amino-acid biosynthesis; L-isoleucine biosynthesis; L-isoleucine from 2-oxobutanoate: step 2/4. It participates in amino-acid biosynthesis; L-valine biosynthesis; L-valine from pyruvate: step 2/4. Involved in the biosynthesis of branched-chain amino acids (BCAA). Catalyzes an alkyl-migration followed by a ketol-acid reduction of (S)-2-acetolactate (S2AL) to yield (R)-2,3-dihydroxy-isovalerate. In the isomerase reaction, S2AL is rearranged via a Mg-dependent methyl migration to produce 3-hydroxy-3-methyl-2-ketobutyrate (HMKB). In the reductase reaction, this 2-ketoacid undergoes a metal-dependent reduction by NADPH to yield (R)-2,3-dihydroxy-isovalerate. This is Ketol-acid reductoisomerase (NADP(+)) from Clostridioides difficile (strain 630) (Peptoclostridium difficile).